We begin with the raw amino-acid sequence, 329 residues long: Acetyl-coenzyme A carboxylase carboxyl transferase subunit alpha (329 aa).

In terms of domain architecture, CoA carboxyltransferase C-terminal spans 40–294 (QLETLAARRR…REAIERHLDE (255 aa)).

The protein belongs to the AccA family. Acetyl-CoA carboxylase is a heterohexamer composed of biotin carboxyl carrier protein (AccB), biotin carboxylase (AccC) and two subunits each of ACCase subunit alpha (AccA) and ACCase subunit beta (AccD).

It is found in the cytoplasm. The catalysed reaction is N(6)-carboxybiotinyl-L-lysyl-[protein] + acetyl-CoA = N(6)-biotinyl-L-lysyl-[protein] + malonyl-CoA. Its pathway is lipid metabolism; malonyl-CoA biosynthesis; malonyl-CoA from acetyl-CoA: step 1/1. Component of the acetyl coenzyme A carboxylase (ACC) complex. First, biotin carboxylase catalyzes the carboxylation of biotin on its carrier protein (BCCP) and then the CO(2) group is transferred by the carboxyltransferase to acetyl-CoA to form malonyl-CoA. The chain is Acetyl-coenzyme A carboxylase carboxyl transferase subunit alpha from Prochlorococcus marinus (strain MIT 9313).